The primary structure comprises 579 residues: MRPWLRHLVLQALRNSRAFCGSHGKPAPLPVPQKIVATWEAISLGRQLVPEYFNFAHDVLDVWSRLEEAGHRPPNPAFWWVNGTGAEIKWSFEELGKQSRKAANVLGGACGLQPGDRMMLVLPRLPEWWLVSVACMRTGTVMIPGVTQLTEKDLKYRLQASRAKSIITSDSLAPRVDAISAECPSLQTKLLVSDSSRPGWLNFRELLREASTEHNCMRTKSRDPLAIYFTSGTTGAPKMVEHSQSSYGLGFVASGRRWVALTESDIFWNTTDTGWVKAAWTLFSAWPNGSCIFVHELPRVDAKVILNTLSKFPITTLCCVPTIFRLLVQEDLTRYQFQSLRHCLTGGEALNPDVREKWKHQTGVELYEGYGQSETVVICANPKGMKIKSGSMGKASPPYDVQIVDDEGNVLPPGEEGNVAVRIRPTRPFCFFNCYLDNPEKTAASEQGDFYITGDRARMDKDGYFWFMGRNDDVINSSSYRIGPVEVESALAEHPAVLESAVVSSPDPIRGEVVKAFIVLTPAYSSHDPEALTRELQEHVKRVTAPYKYPRKVAFVSELPKTVSGKIQRSKLRSQEWGK.

The transit peptide at 1–26 directs the protein to the mitochondrion; the sequence is MRPWLRHLVLQALRNSRAFCGSHGKP. Position 97 is an N6-acetyllysine; alternate (lysine 97). Position 97 is an N6-succinyllysine; alternate (lysine 97). Lysine 152 bears the N6-acetyllysine mark. 230-238 serves as a coordination point for ATP; the sequence is TSGTTGAPK. Residue lysine 303 is modified to N6-acetyllysine; alternate. At lysine 303 the chain carries N6-succinyllysine; alternate. Residues 368 to 373, aspartate 455, arginine 470, and lysine 566 contribute to the ATP site; that span reads EGYGQS.

The protein belongs to the ATP-dependent AMP-binding enzyme family. Mg(2+) is required as a cofactor. Mn(2+) serves as cofactor. As to expression, detected in kidney and liver.

The protein localises to the mitochondrion matrix. It catalyses the reaction a medium-chain fatty acid + ATP + CoA = a medium-chain fatty acyl-CoA + AMP + diphosphate. Functionally, catalyzes the activation of fatty acids by CoA to produce an acyl-CoA, the first step in fatty acid metabolism. This Homo sapiens (Human) protein is Acyl-coenzyme A synthetase ACSM5, mitochondrial (ACSM5).